Here is a 403-residue protein sequence, read N- to C-terminus: Leu/Ile/Val-binding protein homolog 8 (403 aa).

Residues 1–26 (MRLSRLLIGASLGVALSSTAFTAALA) form the signal peptide.

This sequence belongs to the leucine-binding protein family.

Its function is as follows. Component of an amino-acid transport system. This Brucella suis biovar 1 (strain 1330) protein is Leu/Ile/Val-binding protein homolog 8.